Reading from the N-terminus, the 334-residue chain is MNEDLKVNLSGLPRDYLDAAAAENISAAVSSRVPAVEPEPELVVNPWDIVLCTSGTLISCENAIVVLIIFHNPSLRAPMFLLIGSLALADLLAGIGLITNFVFAYLLQSEATKLVTIGLIVASFSASVCSLLAITVDRYLSLYYALTYHSERTVTFTYVMLVMLWGTSICLGLLPVMGWNCLRDESTCSVVRPLTKNNAAILSVSFLFMFALMLQLYIQICKIVMRHAHQIALQHHFLATSHYVTTRKGVSTLAIILGTFAACWMPFTLYSLIADYTYPSIYTYATLLPATYNSIINPVIYAFRNQEIQKALCLICCGCIPSSLAQRARSPSDV.

At 1-48 the chain is on the extracellular side; the sequence is MNEDLKVNLSGLPRDYLDAAAAENISAAVSSRVPAVEPEPELVVNPWD. N-linked (GlcNAc...) asparagine glycans are attached at residues asparagine 8 and asparagine 24. A helical membrane pass occupies residues 49–69; it reads IVLCTSGTLISCENAIVVLII. Residues 70-77 lie on the Cytoplasmic side of the membrane; sequence FHNPSLRA. A helical transmembrane segment spans residues 78–98; that stretch reads PMFLLIGSLALADLLAGIGLI. Residues 99–113 lie on the Extracellular side of the membrane; the sequence is TNFVFAYLLQSEATK. The helical transmembrane segment at 114 to 134 threads the bilayer; that stretch reads LVTIGLIVASFSASVCSLLAI. The Cytoplasmic portion of the chain corresponds to 135 to 158; that stretch reads TVDRYLSLYYALTYHSERTVTFTY. Residues 159 to 179 form a helical membrane-spanning segment; sequence VMLVMLWGTSICLGLLPVMGW. At 180–199 the chain is on the extracellular side; that stretch reads NCLRDESTCSVVRPLTKNNA. A helical membrane pass occupies residues 200–220; sequence AILSVSFLFMFALMLQLYIQI. The Cytoplasmic portion of the chain corresponds to 221-252; that stretch reads CKIVMRHAHQIALQHHFLATSHYVTTRKGVST. The chain crosses the membrane as a helical span at residues 253–273; it reads LAIILGTFAACWMPFTLYSLI. Over 274-282 the chain is Extracellular; sequence ADYTYPSIY. The chain crosses the membrane as a helical span at residues 283 to 303; that stretch reads TYATLLPATYNSIINPVIYAF. Residues 304-334 are Cytoplasmic-facing; sequence RNQEIQKALCLICCGCIPSSLAQRARSPSDV. Cysteine 317 carries the S-palmitoyl cysteine lipid modification. Phosphoserine is present on residues serine 330 and serine 332.

This sequence belongs to the G-protein coupled receptor 1 family.

The protein localises to the cell membrane. Promotes neurite outgrowth and blocks myelin inhibition in neurons. Receptor with constitutive G(s) signaling activity that stimulates cyclic AMP production. This Homo sapiens (Human) protein is G-protein coupled receptor 12 (GPR12).